A 614-amino-acid polypeptide reads, in one-letter code: Probable glycerol-3-phosphate dehydrogenase (614 aa).

Asp-57–Asp-85 serves as a coordination point for FAD. The disordered stretch occupies residues Met-595–Lys-614. The segment covering Pro-598 to Lys-614 has biased composition (basic and acidic residues).

The protein belongs to the FAD-dependent glycerol-3-phosphate dehydrogenase family. The cofactor is FAD.

It is found in the cytoplasm. The enzyme catalyses a quinone + sn-glycerol 3-phosphate = dihydroxyacetone phosphate + a quinol. The protein operates within polyol metabolism; glycerol degradation via glycerol kinase pathway; glycerone phosphate from sn-glycerol 3-phosphate (anaerobic route): step 1/1. This Encephalitozoon cuniculi (strain GB-M1) (Microsporidian parasite) protein is Probable glycerol-3-phosphate dehydrogenase.